The chain runs to 254 residues: Acetylglutamate kinase (254 aa).

Residues 40–41 (GG), Arg62, and Asn154 each bind substrate. ATP contacts are provided by residues 177–182 (DVSGIL) and 205–207 (IIT).

This sequence belongs to the acetylglutamate kinase family. ArgB subfamily. In terms of assembly, homodimer.

The protein localises to the cytoplasm. The catalysed reaction is N-acetyl-L-glutamate + ATP = N-acetyl-L-glutamyl 5-phosphate + ADP. Its pathway is amino-acid biosynthesis; L-arginine biosynthesis; N(2)-acetyl-L-ornithine from L-glutamate: step 2/4. Functionally, catalyzes the ATP-dependent phosphorylation of N-acetyl-L-glutamate. The chain is Acetylglutamate kinase from Yersinia enterocolitica serotype O:8 / biotype 1B (strain NCTC 13174 / 8081).